A 424-amino-acid polypeptide reads, in one-letter code: Histidine--tRNA ligase (424 aa).

Belongs to the class-II aminoacyl-tRNA synthetase family. As to quaternary structure, homodimer.

The protein resides in the cytoplasm. The catalysed reaction is tRNA(His) + L-histidine + ATP = L-histidyl-tRNA(His) + AMP + diphosphate + H(+). The polypeptide is Histidine--tRNA ligase (Shewanella amazonensis (strain ATCC BAA-1098 / SB2B)).